We begin with the raw amino-acid sequence, 413 residues long: Probable protein phosphatase 2C 78 (413 aa).

The disordered stretch occupies residues 21 to 40 (KKATTTTRRRERSSSQAARR). The region spanning 111-409 (KYGVASVCGR…DNVSVVVVDL (299 aa)) is the PPM-type phosphatase domain. Mn(2+) contacts are provided by Asp153, Gly154, Asp327, and Asp400.

The protein belongs to the PP2C family. The cofactor is Mg(2+). It depends on Mn(2+) as a cofactor.

It is found in the golgi apparatus. It localises to the nucleus. The enzyme catalyses O-phospho-L-seryl-[protein] + H2O = L-seryl-[protein] + phosphate. It catalyses the reaction O-phospho-L-threonyl-[protein] + H2O = L-threonyl-[protein] + phosphate. Acts as a negative regulator of abscisic acid (ABA) signaling for stomatal closure in leaves, and controls water loss during leaf senescence. Activated by the NAC029/NAP transcription factor during ABA signaling in senescing leaves. Functions as a negative regulator of osmotic stress and ABA signaling. Acts as a negative regulator of response to drought. The chain is Probable protein phosphatase 2C 78 from Arabidopsis thaliana (Mouse-ear cress).